The primary structure comprises 177 residues: GTP-dependent dephospho-CoA kinase (177 aa).

Positions 25, 31, 48, 49, 50, 67, 69, 124, and 147 each coordinate GTP.

It belongs to the GTP-dependent DPCK family. Monomer in solution.

It carries out the reaction 3'-dephospho-CoA + GTP = GDP + CoA + H(+). Its pathway is cofactor biosynthesis; coenzyme A biosynthesis. Its function is as follows. Catalyzes the GTP-dependent phosphorylation of the 3'-hydroxyl group of dephosphocoenzyme A to form coenzyme A (CoA). Can also use UTP, with lower efficiency and has weak activity with ATP, but shows a strong preference for GTP as the phosphate donor. The protein is GTP-dependent dephospho-CoA kinase of Thermococcus kodakarensis (strain ATCC BAA-918 / JCM 12380 / KOD1) (Pyrococcus kodakaraensis (strain KOD1)).